Consider the following 257-residue polypeptide: AN1-type zinc finger protein 2B (257 aa).

2 AN1-type zinc fingers span residues 4-52 (PDLG…QKDI) and 94-142 (KIFT…HQTS). 16 residues coordinate Zn(2+): Cys10, Cys15, Cys25, Cys28, Cys33, His36, His42, Cys44, Cys100, Cys105, Cys115, Cys118, Cys123, His126, His132, and Cys134. Residues 141–151 (TSRAGLAAISR) form a VCP/p97-interacting motif (VIM) region. Residues 152–184 (AQGLASTSTAPSPSRTLPSSSSPSRATPQLPTR) are disordered. The segment covering 155 to 179 (LASTSTAPSPSRTLPSSSSPSRATP) has biased composition (low complexity). Phosphoserine; by MAPK14 is present on residues Ser163, Ser173, and Ser187. UIM domains lie at 197 to 216 (SEDE…AKPQ) and 221 to 240 (QEED…AEYQ). Cys254 bears the Cysteine methyl ester mark. Residue Cys254 is the site of S-geranylgeranyl cysteine attachment. Positions 254 to 257 (CSLC) match the CAAX motif motif. A propeptide spans 255–257 (SLC) (removed in mature form).

As to quaternary structure, binds 'Lys-48'-linked polyubiquitin chains of ubiquitinated proteins. Associates with the proteasome complex; upon exposure to arsenite. Interacts (via VIM motif) with VCP; the interaction is direct. Interacts with BAG6. Interacts with IGF1R (nascent precursor form). Interacts with DERL1, FAF2, NPLOC4 and UFD1; probably through VCP. In terms of processing, phosphorylated by MAPK14. Phosphorylation has no effect on association with the proteasome complex.

The protein localises to the endoplasmic reticulum membrane. In terms of biological role, plays a role in protein homeostasis by regulating both the translocation and the ubiquitin-mediated proteasomal degradation of nascent proteins at the endoplasmic reticulum. It is involved in the regulation of signal-mediated translocation of proteins into the endoplasmic reticulum. It also plays a role in the ubiquitin-mediated proteasomal degradation of proteins for which signal-mediated translocation to the endoplasmic reticulum has failed. May therefore function in the endoplasmic reticulum stress-induced pre-emptive quality control, a mechanism that selectively attenuates the translocation of newly synthesized proteins into the endoplasmic reticulum and reroutes them to the cytosol for proteasomal degradation. By controlling the steady-state expression of the IGF1R receptor, indirectly regulates the insulin-like growth factor receptor signaling pathway. The sequence is that of AN1-type zinc finger protein 2B from Mus musculus (Mouse).